The chain runs to 585 residues: Glucose oxidase-like protein fsoC (585 aa).

Alanine 104 contributes to the FAD binding site. Catalysis depends on histidine 521, which acts as the Proton donor. The active-site Proton acceptor is the histidine 564.

It belongs to the GMC oxidoreductase family. Monomer. FAD is required as a cofactor.

In terms of biological role, glucose oxidase-like protein; part of the gene cluster that mediates the biosynthesis of the enfumafungin-type antibiotic fuscoatroside. Four enzymes are sufficient to produce fuscoatroside: the terpene cyclase-glycosyl transferase fusion protein fsoAthe cytochrome P450 monoxygenases fsoD and fsoE, and the acetyltransferase fsoF; the cytochrome P450 monooxygenase fsoB and the glucose oxidase-like protein fsoC do not seem to play a role in biosynthesis of fuscoatroside. Glucose oxidase; part of the gene cluster that mediates the biosynthesis of the enfumafungin-type antibiotic, fuscoatroside. The chain is Glucose oxidase-like protein fsoC from Humicola fuscoatra.